The following is a 226-amino-acid chain: MKNERHVLIVFPHPDDESYCVAGTILAYTQRNVPLTYVCLTLGEMGRAMGNPPFATRESLYAIREKELKRATNILGIKDLRMMGYRDKTLEFETPGELRRVIQKCVEELNPSLVISFYPGYAVHPDHDATGEAVAEALATIPENKRPTFYAVAFANNHEAEIGPPHVKNEVKEYVPKKLEALQAHASQFATKVTELKREYEDGVTETVEWLEREPFWIYPFKDKNK.

Zn(2+) contacts are provided by histidine 13, aspartate 16, and histidine 127.

It belongs to the PIGL family. The cofactor is Zn(2+).

The catalysed reaction is (S)-malyl N-acetyl-alpha-D-glucosaminide + H2O = (S)-malyl alpha-D-glucosaminide + acetate. Involved in bacillithiol (BSH) biosynthesis. Catalyzes the second step of the pathway, the deacetylation of N-acetylglucosaminylmalate (GlcNAc-Mal) to glucosamine malate (GlcN-Mal). Could also be involved in bacillithiol-detoxifying pathways through formation of S-mercapturic adducts. This is Probable N-acetyl-alpha-D-glucosaminyl L-malate deacetylase 2 from Bacillus anthracis.